We begin with the raw amino-acid sequence, 853 residues long: DNA mismatch repair protein MutS (853 aa).

An ATP-binding site is contributed by 614–621 (GPNMGGKS).

The protein belongs to the DNA mismatch repair MutS family.

This protein is involved in the repair of mismatches in DNA. It is possible that it carries out the mismatch recognition step. This protein has a weak ATPase activity. The chain is DNA mismatch repair protein MutS from Citrobacter koseri (strain ATCC BAA-895 / CDC 4225-83 / SGSC4696).